Consider the following 252-residue polypeptide: Adenosine 5'-phosphosulfate reductase (252 aa).

[4Fe-4S] cluster is bound by residues cysteine 125, cysteine 126, cysteine 208, and cysteine 211. The disordered stretch occupies residues 219 to 252 (DGYSREGRWSDRDKTECGLHTSPEDEDGAHAAES). The segment covering 221–235 (YSREGRWSDRDKTEC) has biased composition (basic and acidic residues). Cysteine 235 serves as the catalytic Nucleophile; cysteine thiosulfonate intermediate.

Belongs to the PAPS reductase family. CysH subfamily. [4Fe-4S] cluster serves as cofactor.

Its subcellular location is the cytoplasm. The enzyme catalyses [thioredoxin]-disulfide + sulfite + AMP + 2 H(+) = adenosine 5'-phosphosulfate + [thioredoxin]-dithiol. The protein operates within sulfur metabolism; hydrogen sulfide biosynthesis; sulfite from sulfate. Catalyzes the formation of sulfite from adenosine 5'-phosphosulfate (APS) using thioredoxin as an electron donor. This chain is Adenosine 5'-phosphosulfate reductase, found in Salinibacter ruber (strain DSM 13855 / M31).